Here is a 274-residue protein sequence, read N- to C-terminus: Carboxy-S-adenosyl-L-methionine synthase (274 aa).

S-adenosyl-L-methionine is bound by residues Tyr-59, 93-95 (GCS), 149-150 (DI), Asn-164, and Arg-231.

This sequence belongs to the class I-like SAM-binding methyltransferase superfamily. Cx-SAM synthase family. In terms of assembly, homodimer.

The enzyme catalyses prephenate + S-adenosyl-L-methionine = carboxy-S-adenosyl-L-methionine + 3-phenylpyruvate + H2O. Its function is as follows. Catalyzes the conversion of S-adenosyl-L-methionine (SAM) to carboxy-S-adenosyl-L-methionine (Cx-SAM). The chain is Carboxy-S-adenosyl-L-methionine synthase from Psychrobacter sp. (strain PRwf-1).